A 443-amino-acid chain; its full sequence is Tol-Pal system protein TolB (443 aa).

The N-terminal stretch at 1 to 33 (MKIGIINTKIRTVFSAFACMIAASLVCTMPARA) is a signal peptide.

It belongs to the TolB family. The Tol-Pal system is composed of five core proteins: the inner membrane proteins TolA, TolQ and TolR, the periplasmic protein TolB and the outer membrane protein Pal. They form a network linking the inner and outer membranes and the peptidoglycan layer.

The protein localises to the periplasm. In terms of biological role, part of the Tol-Pal system, which plays a role in outer membrane invagination during cell division and is important for maintaining outer membrane integrity. This is Tol-Pal system protein TolB from Brucella suis biovar 1 (strain 1330).